The chain runs to 368 residues: uncharacterized protein (368 aa).

This is an uncharacterized protein from Rickettsia prowazekii (strain Madrid E).